Reading from the N-terminus, the 206-residue chain is Uracil phosphoribosyltransferase (206 aa).

5-phospho-alpha-D-ribose 1-diphosphate contacts are provided by residues Arg-76, Arg-101, and 128-136; that span reads DPMLATGTT. Residues Ile-191 and 196-198 each bind uracil; that span reads GDA. Residue Asp-197 coordinates 5-phospho-alpha-D-ribose 1-diphosphate.

This sequence belongs to the UPRTase family. Requires Mg(2+) as cofactor.

It carries out the reaction UMP + diphosphate = 5-phospho-alpha-D-ribose 1-diphosphate + uracil. It functions in the pathway pyrimidine metabolism; UMP biosynthesis via salvage pathway; UMP from uracil: step 1/1. With respect to regulation, allosterically activated by GTP. Catalyzes the conversion of uracil and 5-phospho-alpha-D-ribose 1-diphosphate (PRPP) to UMP and diphosphate. The sequence is that of Uracil phosphoribosyltransferase from Mycoplasma genitalium (strain ATCC 33530 / DSM 19775 / NCTC 10195 / G37) (Mycoplasmoides genitalium).